The chain runs to 301 residues: ATP synthase gamma chain (301 aa).

It belongs to the ATPase gamma chain family. As to quaternary structure, F-type ATPases have 2 components, CF(1) - the catalytic core - and CF(0) - the membrane proton channel. CF(1) has five subunits: alpha(3), beta(3), gamma(1), delta(1), epsilon(1). CF(0) has three main subunits: a, b and c.

It is found in the cell inner membrane. Produces ATP from ADP in the presence of a proton gradient across the membrane. The gamma chain is believed to be important in regulating ATPase activity and the flow of protons through the CF(0) complex. The chain is ATP synthase gamma chain from Helicobacter pylori (strain ATCC 700392 / 26695) (Campylobacter pylori).